We begin with the raw amino-acid sequence, 192 residues long: 3-isopropylmalate dehydratase small subunit (192 aa).

Belongs to the LeuD family. LeuD type 1 subfamily. In terms of assembly, heterodimer of LeuC and LeuD.

The catalysed reaction is (2R,3S)-3-isopropylmalate = (2S)-2-isopropylmalate. It functions in the pathway amino-acid biosynthesis; L-leucine biosynthesis; L-leucine from 3-methyl-2-oxobutanoate: step 2/4. Functionally, catalyzes the isomerization between 2-isopropylmalate and 3-isopropylmalate, via the formation of 2-isopropylmaleate. This chain is 3-isopropylmalate dehydratase small subunit, found in Zymomonas mobilis subsp. mobilis (strain ATCC 31821 / ZM4 / CP4).